A 368-amino-acid polypeptide reads, in one-letter code: CST complex subunit STN1 (368 aa).

The interaction with CTC1 stretch occupies residues 1–185 (MQPGSSRCEE…KIYDQPFRSS (185 aa)). Positions 57-155 (VDVLGTVVGV…EIHATAYYKV (99 aa)) form a DNA-binding region, OB. 2 winged helix-turn-helix (wHTH) regions span residues 191 to 295 (EALS…YVTR) and 296 to 368 (EDKD…YTAF).

It belongs to the STN1 family. In terms of assembly, component of the CST complex, composed of TEN1/C17orf106, CTC1/C17orf68 and STN1; in the complex interacts directly with TEN1 and CTC1. Interacts with ACD/TPP1, POT1 and POLA1.

It is found in the nucleus. Its subcellular location is the chromosome. The protein localises to the telomere. In terms of biological role, component of the CST complex proposed to act as a specialized replication factor promoting DNA replication under conditions of replication stress or natural replication barriers such as the telomere duplex. The CST complex binds single-stranded DNA with high affinity in a sequence-independent manner, while isolated subunits bind DNA with low affinity by themselves. Initially the CST complex has been proposed to protect telomeres from DNA degradation. However, the CST complex has been shown to be involved in several aspects of telomere replication. The CST complex inhibits telomerase and is involved in telomere length homeostasis; it is proposed to bind to newly telomerase-synthesized 3' overhangs and to terminate telomerase action implicating the association with the ACD:POT1 complex thus interfering with its telomerase stimulation activity. The CST complex is also proposed to be involved in fill-in synthesis of the telomeric C-strand probably implicating recruitment and activation of DNA polymerase alpha. The CST complex facilitates recovery from many forms of exogenous DNA damage; seems to be involved in the re-initiation of DNA replication at repaired forks and/or dormant origins. Required for efficicient replication of the duplex region of the telomere. Promotes efficient replication of lagging-strand telomeres. Promotes general replication start following replication-fork stalling implicating new origin firing. May be in involved in C-strand fill-in during late S/G2 phase independent of its role in telomere duplex replication. The chain is CST complex subunit STN1 from Macaca fascicularis (Crab-eating macaque).